The sequence spans 366 residues: MASSLRAAISKIKRDDVGQQVCPNYVMLRSSVTTKVVRNVVEYQIRTGGFFSCLAMLRPLQYAKRERLLGQRNLERISTRDILQTRDLHSLCMPTPDAPMSNHQASTMRELICSYFKVDHADGLKYIPMDERYSPSSLARLFTMGMAGLHITTEPSYKRVPIMHLAADLDCMTLALPYMITLDGDTVVPVAPTLSAEQLLDDGLKGLACMDISYGCEVDANSRPAGDQSMDSSRCINELYCEETAEAICVLKTCLVLNCMQFKLEMDDLAHNAAELDKIQMMIPFSERVFRMASSFATIDAQCFRFCVMMKDKNLKIDMRETTRLWTRSASDDSVATSSLSISLDRGRWVAADASDARLLVFPIRV.

The important for ssRNA-binding and formation of complexes stretch occupies residues 1-11 (MASSLRAAISK).

This sequence belongs to the orthoreovirus sigma-NS protein family. In terms of assembly, homooligomer; in presence of RNA. Interacts with protein mu-NS; this interaction allows the localization of sigma-NS to the viral factories. Interacts with host G3BP1 (via C-terminus); this interaction induces the relocalization of G3BP1 and other SG proteins to the viral factories periphery.

It localises to the host cytoplasm. Protein that binds to ssRNA and participates with protein mu-NS in forming the matrix of viral factories, which are large inclusions in the host cytoplasm where replication intermediates are assembled and viral RNA replication takes place. Plays a role in the inhibition of the integrated stress response (ISR) to escape from host cell translational shutoff. Participates in the disruption of stress granules (SG) through its association with host G3BP1 and mu-NS. The sequence is that of Protein sigma-NS (S3) from Mammalia (T3D).